A 669-amino-acid polypeptide reads, in one-letter code: Carnitine O-palmitoyltransferase 2, mitochondrial (669 aa).

Residues 1 to 36 (MMAGLLSTQCNSTLSKLKHLSNNPALSVLTSTHRKY) constitute a mitochondrion transit peptide. The Mitochondrial matrix segment spans residues 37-190 (SSKDGAGSEY…GLLEPEVFHL (154 aa)). Positions 191–220 (NPAKSDTDSFKKLIRWVPPSISWFGAYMVN) form an intramembrane region, note=Mitochondrial inner membrane. The Mitochondrial matrix portion of the chain corresponds to 221-669 (AYPLDMSQYF…FTVLDGNPIH (449 aa)). The Proton acceptor role is filled by His-384. Residue 464–476 (GKEQLKKKKLSPD) participates in CoA binding. Residues Tyr-498, Ser-500, and Thr-511 each contribute to the (R)-carnitine site.

The protein belongs to the carnitine/choline acetyltransferase family.

It is found in the mitochondrion inner membrane. The enzyme catalyses (R)-carnitine + hexadecanoyl-CoA = O-hexadecanoyl-(R)-carnitine + CoA. It carries out the reaction octanoyl-CoA + (R)-carnitine = O-octanoyl-(R)-carnitine + CoA. The catalysed reaction is decanoyl-CoA + (R)-carnitine = O-decanoyl-(R)-carnitine + CoA. It catalyses the reaction dodecanoyl-CoA + (R)-carnitine = O-dodecanoyl-R-carnitine + CoA. The enzyme catalyses tetradecanoyl-CoA + (R)-carnitine = O-tetradecanoyl-(R)-carnitine + CoA. It carries out the reaction (R)-carnitine + octadecanoyl-CoA = O-octadecanoyl-(R)-carnitine + CoA. The catalysed reaction is eicosanoyl-CoA + (R)-carnitine = O-eicosanoyl-(R)-carnitine + CoA. It catalyses the reaction (9Z)-tetradecenoyl-CoA + (R)-carnitine = O-(9Z)-tetradecenoyl-(R)-carnitine + CoA. The enzyme catalyses (5Z)-tetradecenoyl-CoA + (R)-carnitine = O-(5Z)-tetradecenoyl-(R)-carnitine + CoA. It carries out the reaction (R)-carnitine + (9Z)-octadecenoyl-CoA = O-(9Z)-octadecenoyl-(R)-carnitine + CoA. The catalysed reaction is 4,8-dimethylnonanoyl-CoA + (R)-carnitine = O-4,8-dimethylnonanoyl-(R)-carnitine + CoA. It functions in the pathway lipid metabolism; fatty acid beta-oxidation. Its function is as follows. Involved in the intramitochondrial synthesis of acylcarnitines from accumulated acyl-CoA metabolites. Reconverts acylcarnitines back into the respective acyl-CoA esters that can then undergo beta-oxidation, an essential step for the mitochondrial uptake of long-chain fatty acids and their subsequent beta-oxidation in the mitochondrion. Active with medium (C8-C12) and long-chain (C14-C18) acyl-CoA esters. The sequence is that of Carnitine O-palmitoyltransferase 2, mitochondrial (cpt2) from Danio rerio (Zebrafish).